The sequence spans 271 residues: Tryptophan synthase alpha chain (271 aa).

Residues Glu49 and Asp60 each act as proton acceptor in the active site.

Belongs to the TrpA family. As to quaternary structure, tetramer of two alpha and two beta chains.

The catalysed reaction is (1S,2R)-1-C-(indol-3-yl)glycerol 3-phosphate + L-serine = D-glyceraldehyde 3-phosphate + L-tryptophan + H2O. The protein operates within amino-acid biosynthesis; L-tryptophan biosynthesis; L-tryptophan from chorismate: step 5/5. Its function is as follows. The alpha subunit is responsible for the aldol cleavage of indoleglycerol phosphate to indole and glyceraldehyde 3-phosphate. The sequence is that of Tryptophan synthase alpha chain from Burkholderia ambifaria (strain MC40-6).